Here is a 191-residue protein sequence, read N- to C-terminus: Orotate phosphoribosyltransferase (191 aa).

114-122 (EDVITTGGS) contacts 5-phospho-alpha-D-ribose 1-diphosphate. Orotate-binding residues include Thr118 and Arg146.

Belongs to the purine/pyrimidine phosphoribosyltransferase family. PyrE subfamily. In terms of assembly, homodimer. It depends on Mg(2+) as a cofactor.

It carries out the reaction orotidine 5'-phosphate + diphosphate = orotate + 5-phospho-alpha-D-ribose 1-diphosphate. The protein operates within pyrimidine metabolism; UMP biosynthesis via de novo pathway; UMP from orotate: step 1/2. In terms of biological role, catalyzes the transfer of a ribosyl phosphate group from 5-phosphoribose 1-diphosphate to orotate, leading to the formation of orotidine monophosphate (OMP). The chain is Orotate phosphoribosyltransferase from Desulforamulus reducens (strain ATCC BAA-1160 / DSM 100696 / MI-1) (Desulfotomaculum reducens).